The sequence spans 67 residues: Lantibiotic Flvbeta.b (67 aa).

Residues 1-34 constitute a propeptide, cleaved by FlvT; it reads MDNNTKLQKLYEQLAATGSEKELDAMLDENMAGA. Serine 36 bears the 2,3-didehydroalanine (Ser); by FlvM2 mark. Threonine 39 and threonine 43 each carry 2,3-didehydrobutyrine; by FlvM2. Cross-links (beta-methyllanthionine (Thr-Cys); by FlvM2) lie at residues 50–56, 58–61, and 62–65; these read TTGFDWC, TGAC, and TYSC.

Post-translationally, contains DL-beta-methyllanthionine, when coepressed in E.coli with the flavecin synthetase FlvM2.

It is found in the secreted. Functionally, lanthionine-containing peptide antibiotic (lantibiotic) only active on Gram-positive bacteria in synergy with Flvalpha.a. Is not active in absence of Flvalpha.a, which is encoded by the same operon than Flvbeta.b. The bactericidal activity of lantibiotics is based on depolarization of energized bacterial cytoplasmic membranes, initiated by the formation of aqueous transmembrane pores. This is Lantibiotic Flvbeta.b from Ruminococcus flavefaciens.